Reading from the N-terminus, the 539-residue chain is CTP synthase (539 aa).

Residues 1–268 (MSFKSIFLTG…SDFLLNKLGF (268 aa)) are amidoligase domain. A CTP-binding site is contributed by Ser-14. Position 14 (Ser-14) interacts with UTP. An ATP-binding site is contributed by 15 to 20 (SLGKGL). Tyr-55 serves as a coordination point for L-glutamine. Residue Asp-72 participates in ATP binding. Residues Asp-72 and Glu-142 each contribute to the Mg(2+) site. CTP is bound by residues 149–151 (DIE), 188–193 (KTKPTQ), and Lys-224. UTP contacts are provided by residues 188-193 (KTKPTQ) and Lys-224. Leu-242 is a binding site for ATP. The Glutamine amidotransferase type-1 domain maps to 294–532 (RIGLVGKYLE…IRAAKAYSLE (239 aa)). Gly-353 contacts L-glutamine. Catalysis depends on Cys-380, which acts as the Nucleophile; for glutamine hydrolysis. Residues 381–384 (LGMQ), Glu-404, and Arg-460 each bind L-glutamine. Active-site residues include His-505 and Glu-507.

It belongs to the CTP synthase family. Homotetramer.

The catalysed reaction is UTP + L-glutamine + ATP + H2O = CTP + L-glutamate + ADP + phosphate + 2 H(+). It carries out the reaction L-glutamine + H2O = L-glutamate + NH4(+). It catalyses the reaction UTP + NH4(+) + ATP = CTP + ADP + phosphate + 2 H(+). It functions in the pathway pyrimidine metabolism; CTP biosynthesis via de novo pathway; CTP from UDP: step 2/2. With respect to regulation, allosterically activated by GTP, when glutamine is the substrate; GTP has no effect on the reaction when ammonia is the substrate. The allosteric effector GTP functions by stabilizing the protein conformation that binds the tetrahedral intermediate(s) formed during glutamine hydrolysis. Inhibited by the product CTP, via allosteric rather than competitive inhibition. Functionally, catalyzes the ATP-dependent amination of UTP to CTP with either L-glutamine or ammonia as the source of nitrogen. May be involved in lipopolysaccharide biosynthesis, potentially channelling CTP directly to CMP-KDO synthetase. Regulates intracellular CTP levels through interactions with the four ribonucleotide triphosphates. The polypeptide is CTP synthase (Chlamydia trachomatis serovar D (strain ATCC VR-885 / DSM 19411 / UW-3/Cx)).